Consider the following 259-residue polypeptide: Adenosylcobinamide-GDP ribazoletransferase (259 aa).

7 helical membrane-spanning segments follow: residues 36-56 (FSPL…ILLL), 65-85 (MPFI…VDGL), 108-128 (IGAS…AALF), 133-153 (LILF…IWAI), 175-195 (GFLI…FILI), 201-221 (IIST…ALII), and 238-258 (GASV…ILPA).

It belongs to the CobS family. It depends on Mg(2+) as a cofactor.

It localises to the cell inner membrane. The catalysed reaction is alpha-ribazole + adenosylcob(III)inamide-GDP = adenosylcob(III)alamin + GMP + H(+). It carries out the reaction alpha-ribazole 5'-phosphate + adenosylcob(III)inamide-GDP = adenosylcob(III)alamin 5'-phosphate + GMP + H(+). It functions in the pathway cofactor biosynthesis; adenosylcobalamin biosynthesis; adenosylcobalamin from cob(II)yrinate a,c-diamide: step 7/7. Its function is as follows. Joins adenosylcobinamide-GDP and alpha-ribazole to generate adenosylcobalamin (Ado-cobalamin). Also synthesizes adenosylcobalamin 5'-phosphate from adenosylcobinamide-GDP and alpha-ribazole 5'-phosphate. This Prochlorococcus marinus (strain SARG / CCMP1375 / SS120) protein is Adenosylcobinamide-GDP ribazoletransferase.